A 423-amino-acid chain; its full sequence is Gamma-glutamyl phosphate reductase (423 aa).

The protein belongs to the gamma-glutamyl phosphate reductase family.

The protein resides in the cytoplasm. It catalyses the reaction L-glutamate 5-semialdehyde + phosphate + NADP(+) = L-glutamyl 5-phosphate + NADPH + H(+). It functions in the pathway amino-acid biosynthesis; L-proline biosynthesis; L-glutamate 5-semialdehyde from L-glutamate: step 2/2. Its function is as follows. Catalyzes the NADPH-dependent reduction of L-glutamate 5-phosphate into L-glutamate 5-semialdehyde and phosphate. The product spontaneously undergoes cyclization to form 1-pyrroline-5-carboxylate. The chain is Gamma-glutamyl phosphate reductase from Pseudomonas fluorescens (strain Pf0-1).